The sequence spans 646 residues: Peptidylprolyl isomerase domain and WD repeat-containing protein 1 (646 aa).

The disordered stretch occupies residues 1–50 (MATESGSDSQLRRRRRRDPEGSEKTELSEREPALAVAGSEENDDENEERW). Alanine 2 bears the N-acetylalanine mark. Basic and acidic residues predominate over residues 17 to 32 (RDPEGSEKTELSEREP). WD repeat units lie at residues 88-126 (MHRD…IEFV), 131-170 (SHLG…MINM), 221-260 (LHVS…YKFP), and 278-319 (KCKA…RVFD). A PPIase cyclophilin-type domain is found at 490-645 (VSDSAIVHTS…EDVSIINITV (156 aa)).

Belongs to the cyclophilin-type PPIase family. PPIL1 subfamily. In terms of assembly, identified in the spliceosome C complex.

It localises to the nucleus. The enzyme catalyses [protein]-peptidylproline (omega=180) = [protein]-peptidylproline (omega=0). With respect to regulation, inhibited by cyclosporin A (CsA). Functionally, PPIase that catalyzes the cis-trans isomerization of proline imidic peptide bonds in oligopeptides and may therefore assist protein folding. May be involved in pre-mRNA splicing. The sequence is that of Peptidylprolyl isomerase domain and WD repeat-containing protein 1 from Mus musculus (Mouse).